Consider the following 461-residue polypeptide: Phosphomethylpyrimidine synthase (461 aa).

Substrate-binding positions include N81, M110, Y140, H176, 196–198, 237–240, and E276; these read SRG and DSLR. H280 contributes to the Zn(2+) binding site. Y303 provides a ligand contact to substrate. Residue H344 coordinates Zn(2+). [4Fe-4S] cluster contacts are provided by C424, C427, and C432.

The protein belongs to the ThiC family. [4Fe-4S] cluster is required as a cofactor.

It catalyses the reaction 5-amino-1-(5-phospho-beta-D-ribosyl)imidazole + S-adenosyl-L-methionine = 4-amino-2-methyl-5-(phosphooxymethyl)pyrimidine + CO + 5'-deoxyadenosine + formate + L-methionine + 3 H(+). Its pathway is cofactor biosynthesis; thiamine diphosphate biosynthesis. Catalyzes the synthesis of the hydroxymethylpyrimidine phosphate (HMP-P) moiety of thiamine from aminoimidazole ribotide (AIR) in a radical S-adenosyl-L-methionine (SAM)-dependent reaction. The protein is Phosphomethylpyrimidine synthase of Thermosynechococcus vestitus (strain NIES-2133 / IAM M-273 / BP-1).